The chain runs to 216 residues: Protein Syd (216 aa).

It belongs to the Syd family.

Its subcellular location is the cell inner membrane. Its function is as follows. Interacts with the SecY protein in vivo. May bind preferentially to an uncomplexed state of SecY, thus functioning either as a chelating agent for excess SecY in the cell or as a regulatory factor that negatively controls the translocase function. The sequence is that of Protein Syd from Shewanella frigidimarina (strain NCIMB 400).